The chain runs to 1299 residues: MSSEATFGSMQIGLATASDIRDWSFGEVKKPETINYRTLKPEKDGLFCEKIFGPSRDWECYCGKYKRVRFKGIICERCGVEVTRAKVRRERMGHIELAAPVTHIWYFKGVPSRLGYLLDLAPKDLEKVIYFAAYMITSVDDEMRHADLPNLQAEHDLEKKQLVDTRDSDIAGIARDLEGELTKLEGEGAKAADKKKARDSADRQMANIRKRADADIDRLDQVWDRFKGLKVTDLEGDEGLYRELRDRYGLYFEGSMGAEAIKKRLENFDMAAESESLRDTIQNGKGQRKTRALKRLKVVNAFLTTKNSPLGMVLDAVPVIPPELRPMVQLDGGRFATSDLNDLYRRVINRNNRLKRLLDLGAPEIIVNNEKRMLQEAVDSLFDNGRRGRPVTGPGNRPLKSLSDMLKGKQGRFRQNLLGKRVDYSGRSVIVVGPQLKLHQCGLPKQMALELFKPFVMKRLVDLNHAQNIKSAKRMVERYRPQVWDVLEEIITEHPVLLNRAPTLHRLGIQAFEPMLVEGKAIQLHPLVCGAFNADFDGDQMAVHLPLSPEAQAEARVLMLSSNNILKPSDGRPVTLPSQDMIIGLYHLTTKRVGSAGEGRIFTSPSEAIMAHDAGVLHLNSTVKIRLDNFVPGEDWEAPAGWEAGQPAIVETSLGQVLFNDTLPADYPWVEKVADKGQLSEIVNDLAERYPKVVVAATLDNLKDAGFYWATRSGVTVAISDIEVPAEKPAILAGYEVKAAKVQSQFEKGLIADDERRQELIDIWNQATNDVADAMRKSLSASNTINRMVSSGARGNWMQVRQIAGIRGLVANPKGEIIPRPIKSSYREGLSVLEYFIATHGARKGLADTALRTANSGYLTRRLVDVSQDVIVREDDCGTEYGLTLPIAVADSNGELVMHEEVENSVYARTLATEVTDAKGKVLAAAGADVGDVLIAELFAAGVTEVKVRSVLTCESAVGTCAQCYGRSLATGKLVDIGEAVGIIAAQSIGEPGTQLTMRTFHTGGAVSASRGEDITQGLPRIQELFEARTPKGVAPIAEAAGRVNIEETERQMRLVLTPDDGTEEIAYPILRRARLLVADGDRVEVGQKLVVGAVDPKQVLRVLGPRAAQKHLVEEVQRVYRSQGVGIHDKHVEVIVRQMLRRVTVIESGDSNLLPGELAERGRFETENRRVVSEGQKPASGRNELMGITKASLATESWLSAASFQETTRVLTQAAMEGKSDPLLGLKENVIIGKLIPAGTGLPRYTDITVEPTEEAKANLFTAPSAFSDFDYAGVGGDLAPEFQAIPLDDYDLGSEYR.

Zn(2+)-binding residues include Cys-60, Cys-62, Cys-75, and Cys-78. Mg(2+) contacts are provided by Asp-535, Asp-537, and Asp-539. 4 residues coordinate Zn(2+): Cys-877, Cys-954, Cys-961, and Cys-964.

It belongs to the RNA polymerase beta' chain family. In terms of assembly, the RNAP catalytic core consists of 2 alpha, 1 beta, 1 beta' and 1 omega subunit. When a sigma factor is associated with the core the holoenzyme is formed, which can initiate transcription. It depends on Mg(2+) as a cofactor. Requires Zn(2+) as cofactor.

It catalyses the reaction RNA(n) + a ribonucleoside 5'-triphosphate = RNA(n+1) + diphosphate. DNA-dependent RNA polymerase catalyzes the transcription of DNA into RNA using the four ribonucleoside triphosphates as substrates. This is DNA-directed RNA polymerase subunit beta' from Renibacterium salmoninarum (strain ATCC 33209 / DSM 20767 / JCM 11484 / NBRC 15589 / NCIMB 2235).